A 289-amino-acid polypeptide reads, in one-letter code: tRNA-cytidine(32) 2-sulfurtransferase (289 aa).

A PP-loop motif motif is present at residues 39–44 (SGGKDS). Residues cysteine 114, cysteine 117, and cysteine 205 each coordinate [4Fe-4S] cluster.

This sequence belongs to the TtcA family. Homodimer. Mg(2+) serves as cofactor. Requires [4Fe-4S] cluster as cofactor.

The protein resides in the cytoplasm. It catalyses the reaction cytidine(32) in tRNA + S-sulfanyl-L-cysteinyl-[cysteine desulfurase] + AH2 + ATP = 2-thiocytidine(32) in tRNA + L-cysteinyl-[cysteine desulfurase] + A + AMP + diphosphate + H(+). It functions in the pathway tRNA modification. Catalyzes the ATP-dependent 2-thiolation of cytidine in position 32 of tRNA, to form 2-thiocytidine (s(2)C32). The sulfur atoms are provided by the cysteine/cysteine desulfurase (IscS) system. In Deinococcus geothermalis (strain DSM 11300 / CIP 105573 / AG-3a), this protein is tRNA-cytidine(32) 2-sulfurtransferase.